Reading from the N-terminus, the 134-residue chain is Putative nickel-responsive regulator (134 aa).

Residues H78, H89, H91, and C97 each coordinate Ni(2+).

The protein belongs to the transcriptional regulatory CopG/NikR family. It depends on Ni(2+) as a cofactor.

Its function is as follows. Transcriptional regulator. The chain is Putative nickel-responsive regulator from Chlorobium limicola (strain DSM 245 / NBRC 103803 / 6330).